Consider the following 960-residue polypeptide: RNA polymerase II subunit A C-terminal domain phosphatase (960 aa).

Residue Met1 is modified to N-acetylmethionine. Positions 178–341 (HRNRKLVLMV…PPAARETQAR (164 aa)) constitute an FCP1 homology domain. The segment at 331–580 (APPAARETQA…EEDTDDDDHL (250 aa)) is disordered. Over residues 439–448 (PGVQPTQGDA) the composition is skewed to polar residues. Over residues 453–463 (LDFDLSSDSES) the composition is skewed to acidic residues. Phosphoserine is present on Ser530. Polar residues predominate over residues 547–556 (ESQNSEQSGV). Positions 566–578 (VGEEEEEDTDDDD) are enriched in acidic residues. The region spanning 619-718 (LKSKVLADVA…DKVEEQLFPL (100 aa)) is the BRCT domain. Phosphoserine occurs at positions 664 and 730. N6-acetyllysine is present on Lys770. Disordered regions lie at residues 770 to 834 (KLIR…MSEA) and 854 to 948 (DILG…ADEM). A phosphoserine mark is found at Ser830, Ser860, and Ser863. Residues 854 to 864 (DILGEGSDDSD) are compositionally biased toward acidic residues. Residues 865–881 (IEKKKPEDQDNEQERAP) show a composition bias toward basic and acidic residues. Residues 934–947 (SNDDEEGSSSEADE) show a composition bias toward acidic residues.

Homodimer. Interacts with GTF2F1. Interacts with WDR77, SNRPB and SNRNP70. In terms of processing, phosphorylated. In the presence of TFIIF, the phosphorylated form has an increased CTD phosphatase activity. The phosphorylation is required for the physical interaction with GTF2F1.

The protein localises to the nucleus. The protein resides in the cytoplasm. It localises to the cytoskeleton. Its subcellular location is the microtubule organizing center. It is found in the centrosome. The protein localises to the spindle. The protein resides in the spindle pole. It localises to the midbody. It carries out the reaction O-phospho-L-seryl-[protein] + H2O = L-seryl-[protein] + phosphate. It catalyses the reaction O-phospho-L-threonyl-[protein] + H2O = L-threonyl-[protein] + phosphate. In terms of biological role, processively dephosphorylates 'Ser-2' and 'Ser-5' of the heptad repeats YSPTSPS in the C-terminal domain of the largest RNA polymerase II subunit. This promotes the activity of RNA polymerase II. Plays a role in the exit from mitosis by dephosphorylating crucial mitotic substrates (USP44, CDC20 and WEE1) that are required for M-phase-promoting factor (MPF)/CDK1 inactivation. The protein is RNA polymerase II subunit A C-terminal domain phosphatase (Ctdp1) of Mus musculus (Mouse).